Here is a 151-residue protein sequence, read N- to C-terminus: Cell division protein SepF (151 aa).

Positions 17–29 (DNEDDYQDQEDEQ) are enriched in acidic residues. Residues 17-42 (DNEDDYQDQEDEQAQQPAPEQPVDNH) are disordered.

It belongs to the SepF family. As to quaternary structure, homodimer. Interacts with FtsZ.

Its subcellular location is the cytoplasm. Functionally, cell division protein that is part of the divisome complex and is recruited early to the Z-ring. Probably stimulates Z-ring formation, perhaps through the cross-linking of FtsZ protofilaments. Its function overlaps with FtsA. This Lacticaseibacillus casei (strain BL23) (Lactobacillus casei) protein is Cell division protein SepF.